Here is a 93-residue protein sequence, read N- to C-terminus: MAKGQSLQDPYLNALRRERIPVSIYLVNGIKLQGQIESFDQFVILLKNTVSQMVYKHAISTVVPARAISHNNNSNHAHQAAPVQSAEVVEKVE.

The Sm domain occupies 9–68; it reads DPYLNALRRERIPVSIYLVNGIKLQGQIESFDQFVILLKNTVSQMVYKHAISTVVPARAI. The span at 70 to 81 shows a compositional bias: low complexity; it reads HNNNSNHAHQAA. The tract at residues 70–93 is disordered; sequence HNNNSNHAHQAAPVQSAEVVEKVE.

Belongs to the Hfq family. Homohexamer.

RNA chaperone that binds small regulatory RNA (sRNAs) and mRNAs to facilitate mRNA translational regulation in response to envelope stress, environmental stress and changes in metabolite concentrations. Also binds with high specificity to tRNAs. The chain is RNA-binding protein Hfq from Glaesserella parasuis serovar 5 (strain SH0165) (Haemophilus parasuis).